Consider the following 557-residue polypeptide: Ribonuclease J 2 (557 aa).

Zn(2+)-binding residues include His76, His78, His144, and Glu166. 366–370 (HASSH) lines the substrate pocket.

The protein belongs to the metallo-beta-lactamase superfamily. RNA-metabolizing metallo-beta-lactamase-like family. Bacterial RNase J subfamily. Homodimer, may be a subunit of the RNA degradosome. Zn(2+) is required as a cofactor.

The protein localises to the cytoplasm. An RNase that has 5'-3' exonuclease and possibly endoonuclease activity. Involved in maturation of rRNA and in some organisms also mRNA maturation and/or decay. This chain is Ribonuclease J 2, found in Staphylococcus aureus (strain MRSA252).